The chain runs to 1001 residues: Kinesin-like protein KIN-14P (1001 aa).

The 120-residue stretch at 53–172 folds into the Calponin-homology (CH) domain; it reads AIRRYEAANW…CVLSLRSFSE (120 aa). The span at 284–300 shows a compositional bias: basic and acidic residues; it reads NESVKHALDPNDDKLLS. Residues 284–322 are disordered; that stretch reads NESVKHALDPNDDKLLSRADTPPEMESTCTCSTGNMDEE. Positions 426-748 constitute a Kinesin motor domain; the sequence is NIRVYCRVRP…LKFAERVATV (323 aa). 509–516 lines the ATP pocket; it reads GQTGSGKT. Residues 756–784 adopt a coiled-coil conformation; the sequence is NKEGGEVKELKEQIACLKAALAKKDGETE. Disordered regions lie at residues 804–830 and 890–1001; these read PPAF…QKKR and EPQW…SAKK. Residues 972 to 984 show a composition bias toward polar residues; that stretch reads PSASTKNGKQLSL.

Belongs to the TRAFAC class myosin-kinesin ATPase superfamily. Kinesin family. KIN-14 subfamily.

This Oryza sativa subsp. japonica (Rice) protein is Kinesin-like protein KIN-14P.